We begin with the raw amino-acid sequence, 190 residues long: Allergen Alt a 2 (190 aa).

This Alternaria alternata (Alternaria rot fungus) protein is Allergen Alt a 2 (ALTA2).